Here is a 269-residue protein sequence, read N- to C-terminus: Zinc transporter ZupT (269 aa).

8 helical membrane-spanning segments follow: residues 12–32, 41–61, 75–95, 126–146, 152–172, 187–207, 211–231, and 249–269; these read AFSITLAAGLFTVLGSGLVMF, LSFGLAFAGGAMVYVSLTEIF, DHAFAAATMAFLAGMGGIALI, MMAAFAITAHNFPEGLATFFA, AVGMPLALAIAIHNIPEGISI, VWACLLSGLAEPLGAALGYLV, FLSPAVFGSVFGVIAGVMVFL, and TVYGLTTGMAVIAVSLVLFHF. The Fe(2+) site is built by asparagine 136 and glutamate 139. 2 residues coordinate Zn(2+): glutamate 139 and histidine 164. 3 residues coordinate Fe(2+): asparagine 165, glutamate 168, and glutamate 197. Glutamate 168 provides a ligand contact to Zn(2+).

This sequence belongs to the ZIP transporter (TC 2.A.5) family. ZupT subfamily.

Its subcellular location is the cell inner membrane. It carries out the reaction Zn(2+)(in) = Zn(2+)(out). In terms of biological role, mediates zinc uptake. May also transport other divalent cations. The sequence is that of Zinc transporter ZupT from Neisseria meningitidis serogroup B (strain ATCC BAA-335 / MC58).